We begin with the raw amino-acid sequence, 473 residues long: UDP-N-acetylmuramate--L-alanine ligase (473 aa).

ATP is bound at residue 122-128 (GTHGKTT).

It belongs to the MurCDEF family.

It is found in the cytoplasm. The enzyme catalyses UDP-N-acetyl-alpha-D-muramate + L-alanine + ATP = UDP-N-acetyl-alpha-D-muramoyl-L-alanine + ADP + phosphate + H(+). It functions in the pathway cell wall biogenesis; peptidoglycan biosynthesis. Cell wall formation. In Teredinibacter turnerae (strain ATCC 39867 / T7901), this protein is UDP-N-acetylmuramate--L-alanine ligase.